A 351-amino-acid polypeptide reads, in one-letter code: Large ribosomal subunit protein uL3 (351 aa).

2 disordered regions span residues 1 to 31 and 246 to 271; these read MGHR…TPRT and KGSR…GQLG.

This sequence belongs to the universal ribosomal protein uL3 family. In terms of assembly, part of the 50S ribosomal subunit. Forms a cluster with proteins L14 and L24e.

Its function is as follows. One of the primary rRNA binding proteins, it binds directly near the 3'-end of the 23S rRNA, where it nucleates assembly of the 50S subunit. The chain is Large ribosomal subunit protein uL3 from Saccharolobus islandicus (strain Y.N.15.51 / Yellowstone #2) (Sulfolobus islandicus).